The chain runs to 293 residues: DNA repair protein RecO (293 aa).

It belongs to the RecO family.

Its function is as follows. Involved in DNA repair and RecF pathway recombination. This Cyanothece sp. (strain PCC 7425 / ATCC 29141) protein is DNA repair protein RecO.